The sequence spans 200 residues: Thymidine kinase (200 aa).

ATP contacts are provided by residues 15-22 (GSMFSGKS) and 88-91 (DEVQ). E89 acts as the Proton acceptor in catalysis. Zn(2+) is bound by residues C145, C148, C183, and H186.

The protein belongs to the thymidine kinase family. In terms of assembly, homotetramer.

It localises to the cytoplasm. It carries out the reaction thymidine + ATP = dTMP + ADP + H(+). The polypeptide is Thymidine kinase (Bacillus pumilus (strain SAFR-032)).